Reading from the N-terminus, the 368-residue chain is Glutamate 5-kinase (368 aa).

Lysine 15 lines the ATP pocket. Substrate contacts are provided by serine 55, aspartate 143, and asparagine 155. Residues 175–176 (SD) and 217–223 (SGGMVSK) each bind ATP. The 78-residue stretch at 277–354 (EGRLTIDAGA…DAQEAALGYA (78 aa)) folds into the PUA domain.

Belongs to the glutamate 5-kinase family.

The protein localises to the cytoplasm. The enzyme catalyses L-glutamate + ATP = L-glutamyl 5-phosphate + ADP. The protein operates within amino-acid biosynthesis; L-proline biosynthesis; L-glutamate 5-semialdehyde from L-glutamate: step 1/2. Its function is as follows. Catalyzes the transfer of a phosphate group to glutamate to form L-glutamate 5-phosphate. The sequence is that of Glutamate 5-kinase from Sphingopyxis alaskensis (strain DSM 13593 / LMG 18877 / RB2256) (Sphingomonas alaskensis).